A 2111-amino-acid chain; its full sequence is Fatty acid synthase beta subunit aflB (2111 aa).

An acetyltransferase (AT) domain region spans residues 200-565; the sequence is IVTVFNGQGV…KAGTAARVIL (366 aa). Residues 618 to 863 form an enoyl reductase (ER) domain region; that stretch reads SRALGLPPVM…AIVDTPGVPD (246 aa). A dehydratase (DH) domain region spans residues 1195-1688; the sequence is GTKPSWRKAL…SPGETLLVDI (494 aa). The MaoC-like domain maps to 1606–1708; sequence EMPTSSDQYA…IVVATARSES (103 aa). The segment at 1727–2091 is malonyl/palmitoyl transferase (MT/PT) domain; it reads YLFTGQGSQK…FENVLAISES (365 aa).

The protein belongs to the fungal fatty acid synthetase subunit beta family. In terms of assembly, [Alpha(6)beta(6)] hexamers of two multifunctional subunits (alpha and beta).

It catalyses the reaction acetyl-CoA + n malonyl-CoA + 2n NADPH + 4n H(+) = a long-chain-acyl-CoA + n CoA + n CO2 + 2n NADP(+).. The catalysed reaction is holo-[ACP] + acetyl-CoA = acetyl-[ACP] + CoA. It carries out the reaction holo-[ACP] + malonyl-CoA = malonyl-[ACP] + CoA. The enzyme catalyses a (3R)-hydroxyacyl-[ACP] = a (2E)-enoyl-[ACP] + H2O. It catalyses the reaction a 2,3-saturated acyl-[ACP] + NAD(+) = a (2E)-enoyl-[ACP] + NADH + H(+). The catalysed reaction is (9Z)-octadecenoyl-[ACP] + H2O = (9Z)-octadecenoate + holo-[ACP] + H(+). It functions in the pathway secondary metabolite biosynthesis. Fatty acid synthase beta subunit; part of the gene cluster that mediates the biosynthesis of aspercryptins, linear lipopeptides built from six amino acids including 2 highly unusual and nonproteogenic amino acids, 2-amino-octanoic acid (2aoa) and 2-amino-dodecanol (2adol). The core structure of aspercryptins is as follows: Ser/Ala-Thr-Ile/Val-2aoa-Asn-2adol. The first step of aspercryptin biosynthesis is the generation of the fatty acid precursors, octanoic and dodecanoic acids, by the FAS subunits atnF and atnM. The fatty acid precursors are likely transformed into the corresponding alpha-amino fatty acids in three steps. First, they are hydroxylated by the cytochrome P450 monooxygenase atnE, then oxidized to the corresponding alpha-keto acids by the NAD(P)-dependent oxidoreductase atnD, and finally converted to the alpha-amino fatty acids by the PLP-dependent aminotransferases atnH or atnJ. the alpha-amino fatty acids, 2-amino-octanoic and 2-amino-dodecanoic acids, are recognized, activated, and covalently tethered to the NRPS atnA by its fourth and sixth adenylation domains. The second module of atnA is the Thr module and contains an epimerase (E) domain responsible for the epimerization of Thr to D-allo-Thr. Additionally, despite atnA having only one epimerase domain, the first amino acid of aspercryptin A1 is D-Ser, suggesting that serine is either loaded directly as D-Ser on the first module or that the epimerase domain in the threonine module epimerizes both L-Ser and L-Thr. After condensation of the hexapeptide of aspercryptin, the C-terminal reductase (TE) domain might be involved in the reductive release and production of the aldehyde hexapeptide. Further reduction would generate aspercryptins. The variety of aspercryptins produced reflects the flexibility of the atnA NRPS, allowing incorporation of alanine instead of serine, valine for isoleucine, and a C10 fatty amino alcohol instead of the C12 version. AtnB seems to be involved in the selectivity for Ile versus Val by the third module. Moreover, type B, C and D aspercryptins have an additional N-terminal cichorine, acetyl and propionyl group respectively. This is Fatty acid synthase beta subunit aflB from Emericella nidulans (strain FGSC A4 / ATCC 38163 / CBS 112.46 / NRRL 194 / M139) (Aspergillus nidulans).